The following is an 873-amino-acid chain: DNA mismatch repair protein MutS (873 aa).

620–627 provides a ligand contact to ATP; sequence GPNMAGKS.

Belongs to the DNA mismatch repair MutS family.

Functionally, this protein is involved in the repair of mismatches in DNA. It is possible that it carries out the mismatch recognition step. This protein has a weak ATPase activity. In Ruminiclostridium cellulolyticum (strain ATCC 35319 / DSM 5812 / JCM 6584 / H10) (Clostridium cellulolyticum), this protein is DNA mismatch repair protein MutS.